An 878-amino-acid polypeptide reads, in one-letter code: Alanine--tRNA ligase (878 aa).

Zn(2+) is bound by residues His567, His571, Cys669, and His673.

This sequence belongs to the class-II aminoacyl-tRNA synthetase family. It depends on Zn(2+) as a cofactor.

The protein resides in the cytoplasm. It carries out the reaction tRNA(Ala) + L-alanine + ATP = L-alanyl-tRNA(Ala) + AMP + diphosphate. Catalyzes the attachment of alanine to tRNA(Ala) in a two-step reaction: alanine is first activated by ATP to form Ala-AMP and then transferred to the acceptor end of tRNA(Ala). Also edits incorrectly charged Ser-tRNA(Ala) and Gly-tRNA(Ala) via its editing domain. This chain is Alanine--tRNA ligase, found in Rickettsia massiliae (strain Mtu5).